A 154-amino-acid chain; its full sequence is Superoxide dismutase [Cu-Zn] (154 aa).

3 residues coordinate Cu cation: H47, H49, and H64. A disulfide bridge connects residues C58 and C147. Positions 64, 72, 81, and 84 each coordinate Zn(2+). A Cu cation-binding site is contributed by H121. A compositionally biased stretch (basic and acidic residues) spans 125-137 (DDLGRSEHPESKK). Residues 125-144 (DDLGRSEHPESKKTGNAGAR) form a disordered region. R144 provides a ligand contact to substrate.

The protein belongs to the Cu-Zn superoxide dismutase family. As to quaternary structure, homodimer. Cu cation is required as a cofactor. It depends on Zn(2+) as a cofactor.

It localises to the cytoplasm. The enzyme catalyses 2 superoxide + 2 H(+) = H2O2 + O2. In terms of biological role, destroys radicals which are normally produced within the cells and which are toxic to biological systems. The protein is Superoxide dismutase [Cu-Zn] (sodC) of Aspergillus oryzae (strain ATCC 42149 / RIB 40) (Yellow koji mold).